Here is a 451-residue protein sequence, read N- to C-terminus: uncharacterized protein (451 aa).

A TRAM domain is found at 2-60; it reads VVKVKQKIPLKIKRMGINGEGIGFYQKTLVFVPGALKGEDIFCQITAVKRNFAEAKLLT. Positions 73, 79, 82, and 162 each coordinate [4Fe-4S] cluster. Positions 283, 312, 333, and 381 each coordinate S-adenosyl-L-methionine. Cysteine 408 functions as the Nucleophile in the catalytic mechanism.

It belongs to the class I-like SAM-binding methyltransferase superfamily. RNA M5U methyltransferase family.

This is an uncharacterized protein from Streptococcus pyogenes serotype M1.